Consider the following 203-residue polypeptide: MRFVLPKGRLLKPSIEFLRKAGVELELPNGRELVSADGRVLLARAFDVPVYVEHGVEVGIAGSDVVLERGSDVFIPLELPFGKCRISVAVPGERKRYPEDMDCFRIATKYPRIASSYFDSIGVDVEVMKLHGSVELSVRTGIADAIVDIVETGQTLRENGLVEVAKVMDVSALLLVNRIAQKVLFDEINELVMKLRGVLDEGA.

The protein belongs to the ATP phosphoribosyltransferase family. Short subfamily.

It localises to the cytoplasm. The enzyme catalyses 1-(5-phospho-beta-D-ribosyl)-ATP + diphosphate = 5-phospho-alpha-D-ribose 1-diphosphate + ATP. Its pathway is amino-acid biosynthesis; L-histidine biosynthesis; L-histidine from 5-phospho-alpha-D-ribose 1-diphosphate: step 1/9. Its function is as follows. Catalyzes the condensation of ATP and 5-phosphoribose 1-diphosphate to form N'-(5'-phosphoribosyl)-ATP (PR-ATP). Has a crucial role in the pathway because the rate of histidine biosynthesis seems to be controlled primarily by regulation of HisG enzymatic activity. The chain is ATP phosphoribosyltransferase from Thermococcus kodakarensis (strain ATCC BAA-918 / JCM 12380 / KOD1) (Pyrococcus kodakaraensis (strain KOD1)).